A 390-amino-acid polypeptide reads, in one-letter code: Nucleotide-sugar uncharacterized transporter 1 (390 aa).

10 helical membrane-spanning segments follow: residues 61-81, 89-109, 128-148, 155-175, 182-201, 206-228, 249-269, 278-298, 306-326, and 329-349; these read ICGP…IIFM, IGFE…YLLM, SLLP…LANV, VGFY…AEFL, SFMK…VATV, FSLF…KILW, ITLL…ALSF, AILV…LALG, VVLG…IFGS, and GFIS…YTYL. The span at 356–365 shows a compositional bias: low complexity; that stretch reads LKTSSSSSAL. The tract at residues 356 to 390 is disordered; it reads LKTSSSSSALSEKKSRFSDLKDDDKNLEPYGSEAV. Basic and acidic residues predominate over residues 366–382; the sequence is SEKKSRFSDLKDDDKNL.

This sequence belongs to the TPT transporter family. TPT (TC 2.A.7.9) subfamily.

The protein localises to the membrane. The polypeptide is Nucleotide-sugar uncharacterized transporter 1 (Arabidopsis thaliana (Mouse-ear cress)).